The chain runs to 328 residues: Phenylalanine--tRNA ligase alpha subunit (328 aa).

Glu253 contributes to the Mg(2+) binding site.

The protein belongs to the class-II aminoacyl-tRNA synthetase family. Phe-tRNA synthetase alpha subunit type 1 subfamily. Tetramer of two alpha and two beta subunits. Mg(2+) serves as cofactor.

It is found in the cytoplasm. The catalysed reaction is tRNA(Phe) + L-phenylalanine + ATP = L-phenylalanyl-tRNA(Phe) + AMP + diphosphate + H(+). The sequence is that of Phenylalanine--tRNA ligase alpha subunit from Coxiella burnetii (strain Dugway 5J108-111).